The sequence spans 141 residues: Lutropin subunit beta (141 aa).

The first 20 residues, 1-20 (MEMFQGLLLWLLLNTGGAWA), serve as a signal peptide directing secretion. 6 cysteine pairs are disulfide-bonded: Cys29–Cys77, Cys43–Cys92, Cys46–Cys130, Cys54–Cys108, Cys58–Cys110, and Cys113–Cys120. The N-linked (GlcNAc...) asparagine glycan is linked to Asn33.

This sequence belongs to the glycoprotein hormones subunit beta family. As to quaternary structure, heterodimer of a common alpha chain and a unique beta chain which confers biological specificity to thyrotropin, lutropin, follitropin and gonadotropin.

It localises to the secreted. Its function is as follows. Promotes spermatogenesis and ovulation by stimulating the testes and ovaries to synthesize steroids. This chain is Lutropin subunit beta (LHB), found in Ailuropoda melanoleuca (Giant panda).